An 85-amino-acid polypeptide reads, in one-letter code: Alpha-conotoxin Lt28.1 (85 aa).

Positions 1–21 (MPKLEMMLLVLLILPLCYIDA) are cleaved as a signal peptide. Positions 22-40 (VGPPPPWNMEDEIIEHWQK) are excised as a propeptide. 4 disulfides stabilise this stretch: C61/C74, C66/C84, C67/C79, and C72/C81.

The protein belongs to the conotoxin D superfamily. In terms of tissue distribution, expressed by the venom duct.

Its subcellular location is the secreted. Functionally, alpha-conotoxins act on postsynaptic membranes, they bind to the nicotinic acetylcholine receptors (nAChR) and thus inhibit them. This toxin weakly inhibits alpha-9-alpha-10/CHRNA9-CHRNA10 nAChRs (IC(50)=3 uM). In Conus litteratus (Lettered cone), this protein is Alpha-conotoxin Lt28.1.